The sequence spans 476 residues: Aspartyl/glutamyl-tRNA(Asn/Gln) amidotransferase subunit B (476 aa).

Belongs to the GatB/GatE family. GatB subfamily. In terms of assembly, heterotrimer of A, B and C subunits.

The enzyme catalyses L-glutamyl-tRNA(Gln) + L-glutamine + ATP + H2O = L-glutaminyl-tRNA(Gln) + L-glutamate + ADP + phosphate + H(+). The catalysed reaction is L-aspartyl-tRNA(Asn) + L-glutamine + ATP + H2O = L-asparaginyl-tRNA(Asn) + L-glutamate + ADP + phosphate + 2 H(+). Allows the formation of correctly charged Asn-tRNA(Asn) or Gln-tRNA(Gln) through the transamidation of misacylated Asp-tRNA(Asn) or Glu-tRNA(Gln) in organisms which lack either or both of asparaginyl-tRNA or glutaminyl-tRNA synthetases. The reaction takes place in the presence of glutamine and ATP through an activated phospho-Asp-tRNA(Asn) or phospho-Glu-tRNA(Gln). The protein is Aspartyl/glutamyl-tRNA(Asn/Gln) amidotransferase subunit B of Neisseria meningitidis serogroup A / serotype 4A (strain DSM 15465 / Z2491).